The sequence spans 153 residues: Transcriptional repressor NrdR (153 aa).

Residues 1–20 (MKCPFCNSADTRVKNSRHSD) are disordered. A zinc finger lies at 3-34 (CPFCNSADTRVKNSRHSDDNMSVRRRRLCEVC). Residues 11–20 (TRVKNSRHSD) show a composition bias toward basic and acidic residues. Positions 49–139 (IMVLKKDGRM…VYMDFSDADD (91 aa)) constitute an ATP-cone domain.

It belongs to the NrdR family. The cofactor is Zn(2+).

Its function is as follows. Negatively regulates transcription of bacterial ribonucleotide reductase nrd genes and operons by binding to NrdR-boxes. This is Transcriptional repressor NrdR from Anaplasma phagocytophilum (strain HZ).